The primary structure comprises 1003 residues: Glycine--tRNA ligase (1003 aa).

The tract at residues 1–310 is glycine--tRNA ligase alpha subunit; it reads MSSQPLTLQA…VTPKKIPTIC (310 aa). Residues 311-1003 form a glycine--tRNA ligase beta subunit region; sequence QPEDFLLEIG…CFGFYAWDVL (693 aa).

It belongs to the class-II aminoacyl-tRNA synthetase family.

The protein resides in the cytoplasm. It catalyses the reaction tRNA(Gly) + glycine + ATP = glycyl-tRNA(Gly) + AMP + diphosphate. The sequence is that of Glycine--tRNA ligase (glyQS) from Chlamydia trachomatis serovar L2 (strain ATCC VR-902B / DSM 19102 / 434/Bu).